Here is a 570-residue protein sequence, read N- to C-terminus: Proline--tRNA ligase (570 aa).

It belongs to the class-II aminoacyl-tRNA synthetase family. ProS type 1 subfamily. In terms of assembly, homodimer.

It is found in the cytoplasm. It carries out the reaction tRNA(Pro) + L-proline + ATP = L-prolyl-tRNA(Pro) + AMP + diphosphate. Its function is as follows. Catalyzes the attachment of proline to tRNA(Pro) in a two-step reaction: proline is first activated by ATP to form Pro-AMP and then transferred to the acceptor end of tRNA(Pro). As ProRS can inadvertently accommodate and process non-cognate amino acids such as alanine and cysteine, to avoid such errors it has two additional distinct editing activities against alanine. One activity is designated as 'pretransfer' editing and involves the tRNA(Pro)-independent hydrolysis of activated Ala-AMP. The other activity is designated 'posttransfer' editing and involves deacylation of mischarged Ala-tRNA(Pro). The misacylated Cys-tRNA(Pro) is not edited by ProRS. The sequence is that of Proline--tRNA ligase from Clostridium perfringens (strain ATCC 13124 / DSM 756 / JCM 1290 / NCIMB 6125 / NCTC 8237 / Type A).